The sequence spans 555 residues: Serine/threonine-protein kinase Nek4 (555 aa).

Residues 4–258 (YEVLEQIGKG…ANELLNHPHL (255 aa)) enclose the Protein kinase domain. ATP contacts are provided by residues 10–18 (IGKGSFGSA) and Lys-33. The active-site Proton acceptor is Asp-129. Disordered stretches follow at residues 288 to 328 (LKER…MFNG), 346 to 372 (QRQE…KAST), and 443 to 477 (NRET…ITKD). A compositionally biased stretch (polar residues) spans 304–320 (PSVSDTEAGSVSSSGKA).

It belongs to the protein kinase superfamily. NEK Ser/Thr protein kinase family. NIMA subfamily.

The enzyme catalyses L-seryl-[protein] + ATP = O-phospho-L-seryl-[protein] + ADP + H(+). The catalysed reaction is L-threonyl-[protein] + ATP = O-phospho-L-threonyl-[protein] + ADP + H(+). May be involved in plant development processes. This is Serine/threonine-protein kinase Nek4 (NEK4) from Arabidopsis thaliana (Mouse-ear cress).